The primary structure comprises 132 residues: Small ribosomal subunit protein uS19 (132 aa).

The protein belongs to the universal ribosomal protein uS19 family.

Protein S19 forms a complex with S13 that binds strongly to the 16S ribosomal RNA. This is Small ribosomal subunit protein uS19 from Korarchaeum cryptofilum (strain OPF8).